Reading from the N-terminus, the 412-residue chain is Acyl-[acyl-carrier-protein] hydrolase FATB2, chloroplastic (412 aa).

2 stretches are compositionally biased toward low complexity: residues 1-13 and 56-66; these read TAASSAFFPVPSA and GSSVGLKSGGL. The N-terminal 46 residues, 1 to 46, are a transit peptide targeting the chloroplast; sequence TAASSAFFPVPSADTSSRPGKLGNGPSSFSPLKPKSIPNGGLQVKA. The interval 1-78 is disordered; sequence TAASSAFFPV…HDDAPSAPPP (78 aa). Residues asparagine 311, histidine 313, and cysteine 348 contribute to the active site.

This sequence belongs to the acyl-ACP thioesterase family.

The protein resides in the plastid. It is found in the chloroplast. The enzyme catalyses tetradecanoyl-[ACP] + H2O = tetradecanoate + holo-[ACP] + H(+). It catalyses the reaction hexadecanoyl-[ACP] + H2O = hexadecanoate + holo-[ACP] + H(+). Plays an essential role in chain termination during de novo fatty acid synthesis. Possesses thioesterase activity for medium chain acyl-ACPs. Substrate preference is 14:0 &gt; 16:0 &gt; 16:1. This chain is Acyl-[acyl-carrier-protein] hydrolase FATB2, chloroplastic, found in Cuphea viscosissima (Blue waxweed).